Reading from the N-terminus, the 235-residue chain is MSRSFRNGFRLLKLSQMDFERAWWDMANLFRAPRRVYRSITLRKQNINRYGREDFSFIVLFSCMIVISALLWALFYMNTPKGYVTTITFMLFVDFGAVGVIMATMYYFIAKRFLMKSNDTILSSTDYQLEWNYCFDVHCNSFFPSFVLLYVIQLFLLPVITRDNFISLFMGNTLYLVALCYYSYLTFIGYQILPFLKNTHALLLPIPMFFIMWALSLLGFNVPKHVVDVYFGKSA.

Topologically, residues 1-54 are cytoplasmic; the sequence is MSRSFRNGFRLLKLSQMDFERAWWDMANLFRAPRRVYRSITLRKQNINRYGRED. The chain crosses the membrane as a helical span at residues 55 to 75; it reads FSFIVLFSCMIVISALLWALF. At 76–88 the chain is on the lumenal side; sequence YMNTPKGYVTTIT. Residues 89–109 traverse the membrane as a helical segment; the sequence is FMLFVDFGAVGVIMATMYYFI. Topologically, residues 110–140 are cytoplasmic; sequence AKRFLMKSNDTILSSTDYQLEWNYCFDVHCN. The helical transmembrane segment at 141–161 threads the bilayer; it reads SFFPSFVLLYVIQLFLLPVIT. Residues 162-175 lie on the Lumenal side of the membrane; sequence RDNFISLFMGNTLY. A helical transmembrane segment spans residues 176 to 196; it reads LVALCYYSYLTFIGYQILPFL. The Cytoplasmic portion of the chain corresponds to 197–201; that stretch reads KNTHA. Residues 202–222 form a helical membrane-spanning segment; sequence LLLPIPMFFIMWALSLLGFNV. Residues 223-235 are Lumenal-facing; that stretch reads PKHVVDVYFGKSA.

The protein belongs to the unc-50 family.

The protein localises to the endoplasmic reticulum membrane. Functionally, has a role in meiosis. The polypeptide is Protein GMH1 homolog (mug16) (Schizosaccharomyces pombe (strain 972 / ATCC 24843) (Fission yeast)).